A 310-amino-acid chain; its full sequence is Cytosolic Fe-S cluster assembly factor NUBP1 homolog (310 aa).

[4Fe-4S] cluster-binding residues include C12, C26, C29, and C35. Position 66–73 (66–73) interacts with ATP; it reads GKGGVGKS. Residues C240 and C243 each contribute to the [4Fe-4S] cluster site.

The protein belongs to the Mrp/NBP35 ATP-binding proteins family. NUBP1/NBP35 subfamily. Heterotetramer of 2 NUBP1 and 2 NUBP2 chains. [4Fe-4S] cluster serves as cofactor.

Its subcellular location is the cytoplasm. Its function is as follows. Component of the cytosolic iron-sulfur (Fe/S) protein assembly (CIA) machinery. Required for maturation of extramitochondrial Fe-S proteins. The NUBP1-NUBP2 heterotetramer forms a Fe-S scaffold complex, mediating the de novo assembly of an Fe-S cluster and its transfer to target apoproteins. The protein is Cytosolic Fe-S cluster assembly factor NUBP1 homolog of Brugia malayi (Filarial nematode worm).